The primary structure comprises 342 residues: Farnesyl pyrophosphate synthase 1 (342 aa).

The isopentenyl diphosphate site is built by Lys48, Arg51, and Gln86. Mg(2+) is bound by residues Asp93 and Asp97. Arg102 lines the dimethylallyl diphosphate pocket. Arg103 provides a ligand contact to isopentenyl diphosphate. Positions 190, 191, 229, 246, and 255 each coordinate dimethylallyl diphosphate.

The protein belongs to the FPP/GGPP synthase family. The cofactor is Mg(2+).

The protein localises to the cytoplasm. It carries out the reaction isopentenyl diphosphate + dimethylallyl diphosphate = (2E)-geranyl diphosphate + diphosphate. It catalyses the reaction isopentenyl diphosphate + (2E)-geranyl diphosphate = (2E,6E)-farnesyl diphosphate + diphosphate. It functions in the pathway isoprenoid biosynthesis; farnesyl diphosphate biosynthesis; farnesyl diphosphate from geranyl diphosphate and isopentenyl diphosphate: step 1/1. It participates in isoprenoid biosynthesis; geranyl diphosphate biosynthesis; geranyl diphosphate from dimethylallyl diphosphate and isopentenyl diphosphate: step 1/1. Its function is as follows. Catalyzes the sequential condensation of isopentenyl pyrophosphate with the allylic pyrophosphates, dimethylallyl pyrophosphate, and then with the resultant geranylpyrophosphate to the ultimate product farnesyl pyrophosphate. The sequence is that of Farnesyl pyrophosphate synthase 1 (FPS1) from Parthenium argentatum (Guayule rubber plant).